We begin with the raw amino-acid sequence, 341 residues long: tRNA N6-adenosine threonylcarbamoyltransferase (341 aa).

Residues H111 and H115 each contribute to the Fe cation site. Substrate is bound by residues 134–138 (LVSGG), D167, G180, and N276. Residue D304 coordinates Fe cation.

The protein belongs to the KAE1 / TsaD family. Fe(2+) serves as cofactor.

It is found in the cytoplasm. It carries out the reaction L-threonylcarbamoyladenylate + adenosine(37) in tRNA = N(6)-L-threonylcarbamoyladenosine(37) in tRNA + AMP + H(+). Functionally, required for the formation of a threonylcarbamoyl group on adenosine at position 37 (t(6)A37) in tRNAs that read codons beginning with adenine. Is involved in the transfer of the threonylcarbamoyl moiety of threonylcarbamoyl-AMP (TC-AMP) to the N6 group of A37, together with TsaE and TsaB. TsaD likely plays a direct catalytic role in this reaction. This Pseudomonas fluorescens (strain ATCC BAA-477 / NRRL B-23932 / Pf-5) protein is tRNA N6-adenosine threonylcarbamoyltransferase.